Consider the following 185-residue polypeptide: Large ribosomal subunit protein uL5 (185 aa).

It belongs to the universal ribosomal protein uL5 family. As to quaternary structure, part of the 50S ribosomal subunit; part of the 5S rRNA/L5/L18/L25 subcomplex. Contacts the 5S rRNA and the P site tRNA. Forms a bridge to the 30S subunit in the 70S ribosome.

This is one of the proteins that bind and probably mediate the attachment of the 5S RNA into the large ribosomal subunit, where it forms part of the central protuberance. In the 70S ribosome it contacts protein S13 of the 30S subunit (bridge B1b), connecting the 2 subunits; this bridge is implicated in subunit movement. Contacts the P site tRNA; the 5S rRNA and some of its associated proteins might help stabilize positioning of ribosome-bound tRNAs. The polypeptide is Large ribosomal subunit protein uL5 (Rhodopseudomonas palustris (strain HaA2)).